We begin with the raw amino-acid sequence, 567 residues long: Urease subunit alpha (567 aa).

Ni(2+)-binding residues include H134, H136, and K217. K217 bears the N6-carboxylysine mark. Residue H219 coordinates substrate. Residues H246 and H272 each contribute to the Ni(2+) site. H320 (proton donor) is an active-site residue. Residue D360 participates in Ni(2+) binding.

It belongs to the metallo-dependent hydrolases superfamily. Urease alpha subunit family. Heterotrimer of UreA (gamma), UreB (beta) and UreC (alpha) subunits. Three heterotrimers associate to form the active enzyme. Requires Ni cation as cofactor. Post-translationally, carboxylation allows a single lysine to coordinate two nickel ions.

It localises to the cytoplasm. The enzyme catalyses urea + 2 H2O + H(+) = hydrogencarbonate + 2 NH4(+). Its pathway is nitrogen metabolism; urea degradation; CO(2) and NH(3) from urea (urease route): step 1/1. This Pseudomonas putida (strain GB-1) protein is Urease subunit alpha.